The sequence spans 37 residues: Large ribosomal subunit protein bL36 (37 aa).

It belongs to the bacterial ribosomal protein bL36 family.

In Leptospira interrogans serogroup Icterohaemorrhagiae serovar Lai (strain 56601), this protein is Large ribosomal subunit protein bL36.